We begin with the raw amino-acid sequence, 373 residues long: Probable jasmonic acid carboxyl methyltransferase 2 (373 aa).

Residue tyrosine 18 coordinates S-adenosyl-L-homocysteine. Glutamine 25 is a jasmonate binding site. S-adenosyl-L-homocysteine-binding residues include cysteine 59, asparagine 64, aspartate 96, leucine 97, serine 135, and phenylalanine 136. Positions 156 and 157 each coordinate jasmonate. Mg(2+) contacts are provided by asparagine 174, aspartate 260, phenylalanine 262, and asparagine 263.

Belongs to the methyltransferase superfamily. Type-7 methyltransferase family. Requires Mg(2+) as cofactor.

The protein resides in the cytoplasm. Its subcellular location is the nucleus. It catalyses the reaction jasmonate + S-adenosyl-L-methionine = methyl (-)-jasmonate + S-adenosyl-L-homocysteine. It functions in the pathway lipid metabolism; oxylipin biosynthesis. Catalyzes the methylation of jasmonate into methyljasmonate, a plant volatile that acts as an important cellular regulator mediating diverse developmental processes and defense responses. This is Probable jasmonic acid carboxyl methyltransferase 2 from Theobroma cacao (Cacao).